The following is a 63-amino-acid chain: Toxin S6C6 (63 aa).

Cystine bridges form between cysteine 3–cysteine 24, cysteine 6–cysteine 11, cysteine 17–cysteine 39, cysteine 43–cysteine 55, and cysteine 56–cysteine 61.

It belongs to the three-finger toxin family. Ancestral subfamily. Orphan group XIX sub-subfamily. As to expression, expressed by the venom gland.

The protein resides in the secreted. Functionally, may enhance presynaptic acetylcholine release. The chain is Toxin S6C6 from Dendroaspis jamesoni kaimosae (Eastern Jameson's mamba).